Here is a 194-residue protein sequence, read N- to C-terminus: MRKWILTRILPTPLYRPCFHLVCLVGTISLACNDMSPEQTATSVNCSSPERHTRSYDYMEGGDIRVRRLFCRTQWYLRIDKRGKVKGTQEMRNSYNIMEIMTVAVGIVAIKGVESEYYLAMNKQGELYAKKECNEDCNFKELILENHYNTSASAKWTHSGGEMFVALNQKGLPVKGKKTKKEQKTAHFLPMAIT.

An N-terminal signal peptide occupies residues 1 to 31 (MRKWILTRILPTPLYRPCFHLVCLVGTISLA). N-linked (GlcNAc...) asparagine glycans are attached at residues asparagine 45 and asparagine 149.

This sequence belongs to the heparin-binding growth factors family. In terms of assembly, interacts with FGFBP1. Interacts with FGFR2. Affinity between fibroblast growth factors (FGFs) and their receptors is increased by heparan sulfate glycosaminoglycans that function as coreceptors.

In terms of biological role, growth factor active on keratinocytes. Possible major paracrine effector of normal epithelial cell proliferation. The protein is Fibroblast growth factor 7 (Fgf7) of Rattus norvegicus (Rat).